The sequence spans 291 residues: Small ribosomal subunit protein uS3 (291 aa).

The KH type-2 domain occupies Ile39–Lys110.

The protein belongs to the universal ribosomal protein uS3 family. In terms of assembly, part of the 30S ribosomal subunit. Forms a tight complex with proteins S10 and S14.

Binds the lower part of the 30S subunit head. Binds mRNA in the 70S ribosome, positioning it for translation. The polypeptide is Small ribosomal subunit protein uS3 (Borreliella afzelii (strain PKo) (Borrelia afzelii)).